Here is a 263-residue protein sequence, read N- to C-terminus: H-2 class II histocompatibility antigen, A-K beta chain (263 aa).

The N-terminal stretch at 1-27 (MALQIPSLLLLAAVVVLTVLSSPGTEG) is a signal peptide. The tract at residues 28–120 (GNSERHFVHQ…TETPTSLRRL (93 aa)) is beta-1. Topologically, residues 28–224 (GNSERHFVHQ…RAQSESARSK (197 aa)) are extracellular. Intrachain disulfides connect cysteine 42-cysteine 104 and cysteine 143-cysteine 199. Asparagine 46 is a glycosylation site (N-linked (GlcNAc...) asparagine). Residues 121-214 (EQPSVVISLS…SLKSPITVEW (94 aa)) form a beta-2 region. Residues 123 to 211 (PSVVISLSRT…EHPSLKSPIT (89 aa)) form the Ig-like C1-type domain. The connecting peptide stretch occupies residues 215–224 (RAQSESARSK). Residues 225–245 (MLSGIGGCVLGVIFLGLGLFI) traverse the membrane as a helical segment. At 246–263 (RHRSQKGPRGPPPAGLLQ) the chain is on the cytoplasmic side.

It belongs to the MHC class II family. In terms of processing, ubiquitinated in immature dendritic cells leading to down-regulation of MHC class II.

It is found in the membrane. The polypeptide is H-2 class II histocompatibility antigen, A-K beta chain (H2-Ab1) (Mus musculus (Mouse)).